A 101-amino-acid chain; its full sequence is NADH-quinone oxidoreductase subunit K (101 aa).

Transmembrane regions (helical) follow at residues 4-24, 30-50, and 61-81; these read LAHFLVLGAILFAISIVGIFL, IVLLMAIELMLLAVNMNFVAF, and VFVFFILTVAAAESAIGLAIL.

The protein belongs to the complex I subunit 4L family. As to quaternary structure, NDH-1 is composed of 14 different subunits. Subunits NuoA, H, J, K, L, M, N constitute the membrane sector of the complex.

It is found in the cell inner membrane. It carries out the reaction a quinone + NADH + 5 H(+)(in) = a quinol + NAD(+) + 4 H(+)(out). Its function is as follows. NDH-1 shuttles electrons from NADH, via FMN and iron-sulfur (Fe-S) centers, to quinones in the respiratory chain. The immediate electron acceptor for the enzyme in this species is believed to be ubiquinone. Couples the redox reaction to proton translocation (for every two electrons transferred, four hydrogen ions are translocated across the cytoplasmic membrane), and thus conserves the redox energy in a proton gradient. The protein is NADH-quinone oxidoreductase subunit K of Cupriavidus pinatubonensis (strain JMP 134 / LMG 1197) (Cupriavidus necator (strain JMP 134)).